We begin with the raw amino-acid sequence, 297 residues long: Coatomer subunit epsilon-2 (297 aa).

The protein belongs to the COPE family. As to quaternary structure, oligomeric complex that consists of at least the alpha, beta, beta', gamma, delta, epsilon and zeta subunits.

Its subcellular location is the cytoplasm. It is found in the golgi apparatus membrane. The protein resides in the cytoplasmic vesicle. It localises to the COPI-coated vesicle membrane. Functionally, the coatomer is a cytosolic protein complex that binds to dilysine motifs and reversibly associates with Golgi non-clathrin-coated vesicles, which further mediate biosynthetic protein transport from the ER, via the Golgi up to the trans Golgi network. The coatomer complex is required for budding from Golgi membranes, and is essential for the retrograde Golgi-to-ER transport of dilysine-tagged proteins. This chain is Coatomer subunit epsilon-2, found in Oryza sativa subsp. indica (Rice).